A 1060-amino-acid chain; its full sequence is Centrosomal protein of 131 kDa (1060 aa).

A compositionally biased stretch (polar residues) spans M1 to P11. The interval M1–T96 is disordered. The tract at residues M1–L244 is interaction with PLK4. A phosphoserine mark is found at S14 and S35. 2 stretches are compositionally biased toward polar residues: residues R32–T50 and L73–G88. Position 47 is a phosphoserine; by MAPKAPK2 (S47). A Phosphoserine; by MAPKAPK2 and PLK4 modification is found at S78. Residues S89, S105, S114, S146, and S150 each carry the phosphoserine modification. Disordered stretches follow at residues L136–R155 and E217–R248. Residues E217–K226 show a composition bias toward basic and acidic residues. One can recognise an IQ domain in the interval N263–G283. 2 stretches are compositionally biased toward basic and acidic residues: residues E314–R327 and K344–E363. The segment at E314–R437 is disordered. Over residues A398 to S408 the composition is skewed to low complexity. Over residues P409–Q424 the composition is skewed to basic and acidic residues. Phosphothreonine is present on T473. Phosphoserine is present on S481.

The protein belongs to the CEP131 family. As to quaternary structure, self-associates. Associates with the centriolar satellite BBSome protein complex Interacts with BBS4; the interaction limits BBS4 availability for association with the BBSome complex, and hence negatively regulates ciliary localization of the BBSome complex. Interacts with MIB1. Interacts with PCM1; the interaction increases in response to ultraviolet light (UV) radiation. Associates with microtubule; association to microtubule is reduced in response to cellular stress, such as UV stimulation, in a process that requires p38 MAP kinase signaling. Interacts with CEP290, DCTN1, MAP1LC3B, PCNT, PCM1 and CEP152. Interacts with 14-3-3 proteins following UV-induced phosphorylation by MAPKAPK2; this inhibits formation of novel centriolar satellites. Interacts with SDCCAG8. Interacts with CCDC61. Interacts with PLK4. Post-translationally, ubiquitinated. Undergoes monoubiquitination catalyzed by the E3 ubiquitin-protein ligase MIB1 in proliferating cells, preventing cilia formation. Monoubiquitination by MIB1 is inhibited in response to cellular stress, such as ultraviolet light (UV) radiation or heat shock, resulting in ciliogenesis restoration. MAPKAPK2-dependent phosphorylation at Ser-47 and Ser-78 occurs in response to cellular stress such as exposure to ultraviolet irradiation and promotes binding to 14-3-3 proteins which leads to cytoplasmic sequestration of CEP131 and blocks formation of new centriolar satellites. Phosphorylation at Ser-78 mediated by PLK4 is essential for proper organization and integrity of centriolar satellites but is dispensable for its localization to centrioles and its function in ciliogenesis. Localized to the pre-acrosome region of round and elongated spermatids in testis but also present in ovary, brain and adipose tissue.

Its subcellular location is the cytoplasm. It is found in the cytoskeleton. It localises to the microtubule organizing center. The protein localises to the centrosome. The protein resides in the centriolar satellite. Its subcellular location is the centriole. It is found in the cilium basal body. It localises to the cytoplasmic vesicle. The protein localises to the secretory vesicle. The protein resides in the acrosome. Component of centriolar satellites contributing to the building of a complex and dynamic network required to regulate cilia/flagellum formation. In proliferating cells, MIB1-mediated ubiquitination induces its sequestration within centriolar satellites, precluding untimely cilia formation initiation. In contrast, during normal and ultraviolet or heat shock cellular stress-induced ciliogenesis, its non-ubiquitinated form is rapidly displaced from centriolar satellites and recruited to centrosome/basal bodies in a microtubule- and p38 MAPK-dependent manner. Also acts as a negative regulator of BBSome ciliary trafficking. Plays a role in sperm flagellar formation; may be involved in the regulation of intraflagellar transport (IFT) and/or intramanchette (IMT) trafficking, which are important for axoneme extension and/or cargo delivery to the nascent sperm tail. Required for optimal cell proliferation and cell cycle progression; may play a role in the regulation of genome stability and centriole duplication in non-ciliogenic cells. Involved in centriole duplication. Required for CEP152, WDR62 and CEP63 centrosomal localization and promotes the centrosomal localization of CDK2. Essential for maintaining proper centriolar satellite integrity. This Mus musculus (Mouse) protein is Centrosomal protein of 131 kDa (Cep131).